We begin with the raw amino-acid sequence, 1927 residues long: Lactase/phlorizin hydrolase (1927 aa).

An N-terminal signal peptide occupies residues 1–19 (MELSWHVVFIALLSFSCWG). The propeptide at 20–868 (SDWESDRNFI…NTVNLPSKVR (849 aa)) is XBetaGly. Topologically, residues 20 to 1882 (SDWESDRNFI…LMLGTTEAQT (1863 aa)) are extracellular. N-linked (GlcNAc...) asparagine glycosylation occurs at asparagine 42. Positions 44–286 (SGLLGDQSSN…FIFNLKLPDC (243 aa)) are glycosyl hydrolase-1 1; Region I. The glycosyl hydrolase-1 2; Region II stretch occupies residues 362 to 855 (IWEAFANQSR…GFLTKGAKRL (494 aa)). Residues asparagine 368, asparagine 418, asparagine 512, asparagine 821, asparagine 934, asparagine 946, and asparagine 989 are each glycosylated (N-linked (GlcNAc...) asparagine). Positions 902–1366 (TFRDDFLWGV…EVITNNGMPL (465 aa)) are glycosyl hydrolase-1 3; Region III. Phlorizin hydrolase/glycosylceramidase activity. The Proton donor; for phlorizin hydrolase/Glycosylceramidase activity role is filled by glutamate 1065. Asparagine 1174 is a glycosylation site (N-linked (GlcNAc...) asparagine). The disordered stretch occupies residues 1220–1244 (RLNPPSYEDDQEMAEEEDPSWPSTA). The span at 1226-1238 (YEDDQEMAEEEDP) shows a compositional bias: acidic residues. Glutamate 1273 acts as the Nucleophile; for phlorizin hydrolase/Glycosylceramidase activity in catalysis. 2 N-linked (GlcNAc...) asparagine glycosylation sites follow: asparagine 1340 and asparagine 1508. The interval 1373 to 1846 (LYGRFPEGFI…CNGFPDPATG (474 aa)) is glycosyl hydrolase-1 4; Region IV. Lactase activity. Glutamate 1538 (proton donor; for lactase activity) is an active-site residue. The interval 1647 to 1927 (RDRSLAAGLN…QQELSPVSSF (281 aa)) is required for homodimerization and transport to the plasma membrane. Asparagine 1656 and asparagine 1672 each carry an N-linked (GlcNAc...) asparagine glycan. The active-site Nucleophile; for lactase activity is the glutamate 1749. 2 N-linked (GlcNAc...) asparagine glycosylation sites follow: asparagine 1761 and asparagine 1814. Residues 1883 to 1901 (ALYVLFSLVLLGVCGLAFL) form a helical membrane-spanning segment. Topologically, residues 1902-1927 (SYKYCKRSKQGKTQRSQQELSPVSSF) are cytoplasmic.

It belongs to the glycosyl hydrolase 1 family. In terms of assembly, homodimer. In terms of processing, N-glycosylated. Specifically expressed in small intestine.

The protein resides in the apical cell membrane. It catalyses the reaction lactose + H2O = beta-D-galactose + D-glucose. It carries out the reaction phlorizin + H2O = phloretin + beta-D-glucose. The enzyme catalyses D-cellobiose + H2O = beta-D-glucose + D-glucose. The catalysed reaction is quercetin 4'-O-beta-D-glucoside + H2O = quercetin + beta-D-glucose. It catalyses the reaction quercetin 3-O-beta-D-glucoside + H2O = quercetin + beta-D-glucose. It carries out the reaction kaempferol 3-O-beta-D-glucoside + H2O = kaempferol + beta-D-glucose. The enzyme catalyses luteolin 7-O-beta-D-glucoside + H2O = luteolin + beta-D-glucose. The catalysed reaction is luteolin 4'-O-beta-D-glucoside + H2O = luteolin + beta-D-glucose. It catalyses the reaction (2S)-naringenin 7-O-beta-D-glucoside + H2O = (2S)-naringenin + beta-D-glucose. It carries out the reaction eriodictyol-7-O-beta-D-glucoside + H2O = (S)-eriodictyol + beta-D-glucose. The enzyme catalyses apigenin 7-O-beta-D-glucoside + H2O = apigenin + beta-D-glucose. The catalysed reaction is daidzein 7-O-beta-D-glucoside + H2O = daidzein + beta-D-glucose + H(+). It catalyses the reaction genistein 7-O-beta-D-glucoside + H2O = genistein + beta-D-glucose. It carries out the reaction a beta-D-galactosyl-N-acylsphingosine + H2O = a ceramide + beta-D-galactose.. The enzyme catalyses beta-D-glucosyl-(1&lt;-&gt;1')-N-hexadecanoylsphing-4-enine + H2O = N-hexadecanoylsphing-4-enine + beta-D-glucose. The catalysed reaction is beta-D-galactosyl-(1&lt;-&gt;1')-N-hexadecanoylsphing-4-enine + H2O = beta-D-galactose + N-hexadecanoylsphing-4-enine. It catalyses the reaction beta-D-galactosyl-(1&lt;-&gt;1')-N-hexadecanoylsphinganine + H2O = N-hexadecanoylsphinganine + beta-D-galactose. It carries out the reaction beta-D-glucosyl-(1&lt;-&gt;1')-N-hexadecanoylsphinganine + H2O = N-hexadecanoylsphinganine + beta-D-glucose. In terms of biological role, broad specificity glycosidase of the intestinal brush border membrane that hydrolyzes lactose, the main sugar in mammalian milk, to produce D-glucose and D-galactose. The mature protein is composed of two domains that catalyze the hydrolysis of beta-glucopyranosides and beta-galactopyranosides, with a preference for hydrophilic aglycones (in lactose and cellobiose) for one domain and hydrophobic aglycones (in phlorizin and glycosylceramides) for the other. The chain is Lactase/phlorizin hydrolase from Homo sapiens (Human).